Reading from the N-terminus, the 449-residue chain is Elongation factor 1-alpha (449 aa).

Residues 5 to 230 (KVHINIVVIG…DQINEPKRPS (226 aa)) enclose the tr-type G domain. The G1 stretch occupies residues 14-21 (GHVDSGKS). Position 14-21 (14-21 (GHVDSGKS)) interacts with GTP. K55 carries the post-translational modification N6,N6-dimethyllysine. Residues 70–74 (GITID) form a G2 region. Residue K79 is modified to N6,N6,N6-trimethyllysine. The interval 91-94 (DAPG) is G3. Residues 91–95 (DAPGH) and 153–156 (NKMD) each bind GTP. The segment at 153–156 (NKMD) is G4. K187 is subject to N6,N6,N6-trimethyllysine. A G5 region spans residues 194–196 (SGF). K261 bears the N6-methyllysine mark. Position 289 is a 5-glutamyl glycerylphosphorylethanolamine (E289). At K306 the chain carries N6,N6,N6-trimethyllysine. At E362 the chain carries 5-glutamyl glycerylphosphorylethanolamine. At K396 the chain carries N6,N6,N6-trimethyllysine.

The protein belongs to the TRAFAC class translation factor GTPase superfamily. Classic translation factor GTPase family. EF-Tu/EF-1A subfamily.

The protein resides in the cytoplasm. Functionally, this protein promotes the GTP-dependent binding of aminoacyl-tRNA to the A-site of ribosomes during protein biosynthesis. The sequence is that of Elongation factor 1-alpha from Daucus carota (Wild carrot).